We begin with the raw amino-acid sequence, 379 residues long: MTEYLFTSESVSEGHPDKIADQISDALLDEIIKQDLKARVACETYVKTGMVLIGGEITTTAWVDVEEITRNTINNIGYINSETGFDANSCAVLSTIGKQSPDITQGVDRCNPLEQGAGDQGIIFGYATNETEVLMPAPITYAHLLVKKQSELRKKNILHWLRPDAKSQVTFKYKNGRIIGIDTVVFSTQHKESITQDVLKEAVMEEIIKPVLPNKWLTKNTKFFINPTGRFVIGGPMGDCGLTGRKIIVDTYGGMSRHGGGAFSGKDPSKVDRSAAYAARYVAKNIVAAGLADRCEIQLSYAIGIAEPTSIMIETFRTGKISNKSLINLVRNIFDLRPYGLIEMLDLLRPIYLNTAVYGHFGREEFPWEKLDKVDELLQ.

H15 provides a ligand contact to ATP. D17 serves as a coordination point for Mg(2+). E43 serves as a coordination point for K(+). Residues E56 and Q99 each contribute to the L-methionine site. A flexible loop region spans residues 99-109 (QSPDITQGVDR). ATP is bound by residues 164-166 (DAK), 230-231 (RF), D239, 245-246 (RK), A262, and K266. L-methionine is bound at residue D239. Position 270 (K270) interacts with L-methionine.

It belongs to the AdoMet synthase family. As to quaternary structure, homotetramer; dimer of dimers. Requires Mg(2+) as cofactor. K(+) is required as a cofactor.

The protein localises to the cytoplasm. The catalysed reaction is L-methionine + ATP + H2O = S-adenosyl-L-methionine + phosphate + diphosphate. It functions in the pathway amino-acid biosynthesis; S-adenosyl-L-methionine biosynthesis; S-adenosyl-L-methionine from L-methionine: step 1/1. In terms of biological role, catalyzes the formation of S-adenosylmethionine (AdoMet) from methionine and ATP. The overall synthetic reaction is composed of two sequential steps, AdoMet formation and the subsequent tripolyphosphate hydrolysis which occurs prior to release of AdoMet from the enzyme. This is S-adenosylmethionine synthase from Buchnera aphidicola subsp. Schizaphis graminum (strain Sg).